The following is a 208-amino-acid chain: Pyridoxine/pyridoxamine 5'-phosphate oxidase (208 aa).

FMN-binding positions include 53-58, 68-69, Lys-75, and Gln-100; these read RTVLLK and YS. Lys-58 is a substrate binding site. Positions 118, 122, and 126 each coordinate substrate. Residues 135–136 and Trp-180 each bind FMN; that span reads QS. Position 186 to 188 (186 to 188) interacts with substrate; it reads RLH. Arg-190 contacts FMN.

This sequence belongs to the pyridoxamine 5'-phosphate oxidase family. In terms of assembly, homodimer. Requires FMN as cofactor.

The catalysed reaction is pyridoxamine 5'-phosphate + O2 + H2O = pyridoxal 5'-phosphate + H2O2 + NH4(+). The enzyme catalyses pyridoxine 5'-phosphate + O2 = pyridoxal 5'-phosphate + H2O2. It functions in the pathway cofactor metabolism; pyridoxal 5'-phosphate salvage; pyridoxal 5'-phosphate from pyridoxamine 5'-phosphate: step 1/1. It participates in cofactor metabolism; pyridoxal 5'-phosphate salvage; pyridoxal 5'-phosphate from pyridoxine 5'-phosphate: step 1/1. Its function is as follows. Catalyzes the oxidation of either pyridoxine 5'-phosphate (PNP) or pyridoxamine 5'-phosphate (PMP) into pyridoxal 5'-phosphate (PLP). The polypeptide is Pyridoxine/pyridoxamine 5'-phosphate oxidase (Xylella fastidiosa (strain Temecula1 / ATCC 700964)).